Here is a 579-residue protein sequence, read N- to C-terminus: uncharacterized protein (579 aa).

Helical transmembrane passes span 20-40 (ALWAMMVGFFMIMLDSTVVAI), 54-74 (ATVVWVTSAYLLAYAVPMLVA), 86-106 (LYLIGLGVFTVASLGCGLSSG), 142-162 (GVALGAWGTVASVASLVGPLA), 174-194 (WIFFVNVPVGVIGLILAAYLI), 204-224 (FDWFGVGLSGAGMFLIVFGLQ), 234-254 (WIWAVIVGGIGFMSLFVYWQA), 279-299 (IAIIAFAGTGMMLPVTFYAQA), 310-330 (VLFAPTAIVGGVLAPFVGMII), 335-355 (PLCVLGFGFSVLAIAMTWLLC), 366-386 (LVLPFIALGVAGAFVWSPLTV), and 467-487 (MLLPAFVALFGIVAALFLVDF). The disordered stretch occupies residues 516–579 (REPEEDCDTQ…DTESTAPSAL (64 aa)). Over residues 526–540 (PLRASRPAAAAASRS) the composition is skewed to low complexity. Positions 570-579 (DTESTAPSAL) are enriched in polar residues.

This sequence belongs to the major facilitator superfamily. EmrB family.

Its subcellular location is the cell membrane. This is an uncharacterized protein from Mycobacterium tuberculosis (strain ATCC 25618 / H37Rv).